The primary structure comprises 249 residues: Type I iodothyronine deiodinase (249 aa).

The Extracellular portion of the chain corresponds to 1-12; sequence MGLPRPGLWLKR. A helical; Signal-anchor for type III membrane protein transmembrane segment spans residues 13–33; it reads LWVLVQVAVEVAVGKVLMTLF. Topologically, residues 34–249 are cytoplasmic; the sequence is PERVKQNILA…VRAVLEELHS (216 aa). Residue Sec-126 is part of the active site. A non-standard amino acid (selenocysteine) is located at residue Sec-126.

Belongs to the iodothyronine deiodinase family. As to quaternary structure, predominantly monomer. Can form homodimers but homodimerization is not essential for enzyme activity.

The protein resides in the cell membrane. Its subcellular location is the endoplasmic reticulum membrane. It is found in the basolateral cell membrane. It catalyses the reaction 3,3',5-triiodo-L-thyronine + iodide + A + H(+) = L-thyroxine + AH2. The enzyme catalyses 3,3',5'-triiodo-L-thyronine + iodide + A + H(+) = L-thyroxine + AH2. The catalysed reaction is 3,3'-diiodo-L-thyronine + iodide + A + H(+) = 3,3',5'-triiodo-L-thyronine + AH2. It carries out the reaction 3,3'-diiodo-L-thyronine + iodide + A + H(+) = 3,3',5-triiodo-L-thyronine + AH2. It catalyses the reaction 3'-iodo-L-thyronine + iodide + A + H(+) = 3',5'-diiodo-L-thyronine + AH2. The enzyme catalyses 3-iodo-L-thyronine + iodide + A + H(+) = 3,5-diiodo-L-thyronine + AH2. The catalysed reaction is 3-iodo-L-thyronine + iodide + A + H(+) = 3,3'-diiodo-L-thyronine + AH2. It carries out the reaction 3,3'-diiodothyronamine + iodide + A + H(+) = 3,3',5'-triiodothyronamine + AH2. It catalyses the reaction 3'-iodothyronamine + iodide + A + H(+) = 3',5'-diiodothyronamine + AH2. The enzyme catalyses 3-iodothyronamine + iodide + A + H(+) = 3,3'-diiodothyronamine + AH2. The catalysed reaction is 3,3'-diiodothyronamine + iodide + A + H(+) = 3,3',5-triiodothyronamine + AH2. It carries out the reaction 3-iodothyronamine + iodide + A + H(+) = 3,5-diiodothyronamine + AH2. It catalyses the reaction 3,3'-diiodo-L-thyronine sulfate + iodide + A + H(+) = 3,3',5'-triiodo-L-thyronine sulfate + AH2. The enzyme catalyses 3,3',5'-triiodo-L-thyronine sulfate + iodide + A + H(+) = L-thyroxine sulfate + AH2. The catalysed reaction is 3,3'-diiodo-L-thyronine sulfate + iodide + A + H(+) = 3,3',5-triiodo-L-thyronine sulfate + AH2. Plays a crucial role in the metabolism of thyroid hormones (TH) and has specific roles in TH activation and inactivation by deiodination. Catalyzes the deiodination of L-thyroxine (T4) to 3,5,3'-triiodothyronine (T3) via outer-ring deiodination (ORD) and of T4 to 3,3',5'-triiodothyronine (rT3) via inner-ring deiodination (IRD). Catalyzes the deiodiantion of rT3 to 3,3'-diiodothyronine (3,3'-T2) and 3',5'-diiodothyronine (3',5'-T2) to 3'-monoiodothyronine (3'-T1) via ORD. Catalyzes the deiodination of T3 to 3,3'-T2, 3,5-diiodothyronine (3,5-T2) to 3-monoiodothyronine (3-T1) and 3,3'-T2 to 3-T1 via IRD. Catalyzes the phenolic ring deiodinations of 3,3',5'-triiodothyronamine, 3',5'-diiodothyronamine and 3,3'-diiodothyronamine as well as tyrosyl ring deiodinations of 3,5,3'-triiodothyronamine and 3,5-diiodothyronamine. Catalyzes the deiodination of L-thyroxine sulfate and 3,3',5-triiodo-L-thyronine sulfate via IRD and of 3,3',5'-triiodo-L-thyronine sulfate via ORD. The sequence is that of Type I iodothyronine deiodinase (DIO1) from Oryctolagus cuniculus (Rabbit).